Here is a 681-residue protein sequence, read N- to C-terminus: Kojibiose hydrolase (681 aa).

An N-terminal signal peptide occupies residues 1-23; sequence MKKYIFNHVFFFLMLCGSNYLYS. The beta-D-glucose site is built by R74, W343, D344, W391, E392, T407, E472, W473, K538, Q539, and D573. E472 functions as the Proton donor in the catalytic mechanism. E616 functions as the Proton acceptor in the catalytic mechanism.

This sequence belongs to the glycosyl hydrolase 65 family. Homohexamer; dimer of trimers.

It is found in the periplasm. The enzyme catalyses kojibiose + H2O = beta-D-glucose + D-glucose. Glycosidase that specifically hydrolyzes kojibiose to beta-glucose and glucose. Also hydrolyzes, with lower catalytic efficiency, longer kojioligosaccharides (from kojitriose to kojipentaose) and shorter oligosaccharides produced by the degradation of dextran-containing alpha-1,2 branches. Probably acts on alpha-(1-&gt;2)-glucosyl isomaltooligosaccharides. Shows weak activity with nigerose but has no activity toward p-nitrophenyl alpha-glucopyranoside, which is a general substrate of exo-acting alpha-glucoside hydrolases. Has a strict specificity for alpha-1,2-glucosidic linkages. Catalyzes the hydrolytic reaction via an anomer-inverting mechanism. This is Kojibiose hydrolase from Flavobacterium johnsoniae (strain ATCC 17061 / DSM 2064 / JCM 8514 / BCRC 14874 / CCUG 350202 / NBRC 14942 / NCIMB 11054 / UW101) (Cytophaga johnsonae).